A 345-amino-acid polypeptide reads, in one-letter code: S-adenosylmethionine:tRNA ribosyltransferase-isomerase (345 aa).

This sequence belongs to the QueA family. As to quaternary structure, monomer.

The protein localises to the cytoplasm. It catalyses the reaction 7-aminomethyl-7-carbaguanosine(34) in tRNA + S-adenosyl-L-methionine = epoxyqueuosine(34) in tRNA + adenine + L-methionine + 2 H(+). It participates in tRNA modification; tRNA-queuosine biosynthesis. Its function is as follows. Transfers and isomerizes the ribose moiety from AdoMet to the 7-aminomethyl group of 7-deazaguanine (preQ1-tRNA) to give epoxyqueuosine (oQ-tRNA). This is S-adenosylmethionine:tRNA ribosyltransferase-isomerase from Lactococcus lactis subsp. lactis (strain IL1403) (Streptococcus lactis).